A 428-amino-acid chain; its full sequence is MSSIIDVYAREVLDSRGNPTVEVEVYTEAGAMGSAIVPSGASTGVHEAVELRDNDEKRFLGKGVETAVDNVNLEIADELVGWDVFDQVGIDNYLIELDGTENKSRLGANAILGVSLAVAKAAADENGQRLFEYIGGVNGKTLPVPMMNILNGGQHADNNVDIQEFMIMPVGGENFKESLRIGTEVFHNLKNVLKSRKLNTAVGDEGGFAPNLESNEEALQTIVEAIKKAGYEPGKDVMIAIDAAASEFYEDGKYNMAGDNAVRTSDEMIEYYKNLVEKYPIISIEDGLAEDDWDGWKKLTQELGSKIQLVGDDLFVTNVKRLQKGIEMGVCNSILIKLNQIGTLTETLDAIELAKRHGYTAVISHRSGETEDTTIADVAVATNAGQIKTGSTSRTDRICKYNQLLRIEDMLESTAVYDGIKTFYNLSK.

Q163 lines the (2R)-2-phosphoglycerate pocket. E205 acts as the Proton donor in catalysis. Mg(2+)-binding residues include D242, E285, and D312. Residues K337, R366, S367, and K388 each coordinate (2R)-2-phosphoglycerate. K337 acts as the Proton acceptor in catalysis.

Belongs to the enolase family. Mg(2+) serves as cofactor.

It localises to the cytoplasm. The protein resides in the secreted. Its subcellular location is the cell surface. It catalyses the reaction (2R)-2-phosphoglycerate = phosphoenolpyruvate + H2O. The protein operates within carbohydrate degradation; glycolysis; pyruvate from D-glyceraldehyde 3-phosphate: step 4/5. Its function is as follows. Catalyzes the reversible conversion of 2-phosphoglycerate (2-PG) into phosphoenolpyruvate (PEP). It is essential for the degradation of carbohydrates via glycolysis. This Finegoldia magna (strain ATCC 29328 / DSM 20472 / WAL 2508) (Peptostreptococcus magnus) protein is Enolase.